A 146-amino-acid polypeptide reads, in one-letter code: MAEAEKLFKINIVTPNGLIYSHRGSSVSMRAIDGDRQILYNHLPILTPLTIGEVRVQRGADVDHKVDHIAVSGGIIEFANNVATIIADNAERARNIDLSRAEAAKQRAEAHITEAKEKHDEQLLERAQIALRRAVNRIHVYGALHK.

This sequence belongs to the ATPase epsilon chain family. As to quaternary structure, F-type ATPases have 2 components, CF(1) - the catalytic core - and CF(0) - the membrane proton channel. CF(1) has five subunits: alpha(3), beta(3), gamma(1), delta(1), epsilon(1). CF(0) has three main subunits: a, b and c.

It localises to the cell membrane. Produces ATP from ADP in the presence of a proton gradient across the membrane. The polypeptide is ATP synthase epsilon chain (Lactobacillus delbrueckii subsp. bulgaricus (strain ATCC 11842 / DSM 20081 / BCRC 10696 / JCM 1002 / NBRC 13953 / NCIMB 11778 / NCTC 12712 / WDCM 00102 / Lb 14)).